Reading from the N-terminus, the 760-residue chain is Alpha-amylase (760 aa).

The N-terminal stretch at 1-34 (MSKRSKLLKRRMLSLSVICVLIGYGPVFNPVRSQ) is a signal peptide. Positions 143, 184, and 192 each coordinate Ca(2+). Asp222 (nucleophile) is an active-site residue. His226 contributes to the Ca(2+) binding site. The active-site Proton donor is the Glu262.

This sequence belongs to the glycosyl hydrolase 13 family. In terms of assembly, monomer. The cofactor is Ca(2+).

It carries out the reaction Endohydrolysis of (1-&gt;4)-alpha-D-glucosidic linkages in polysaccharides containing three or more (1-&gt;4)-alpha-linked D-glucose units.. The chain is Alpha-amylase (amyA) from Clostridium acetobutylicum (strain ATCC 824 / DSM 792 / JCM 1419 / IAM 19013 / LMG 5710 / NBRC 13948 / NRRL B-527 / VKM B-1787 / 2291 / W).